We begin with the raw amino-acid sequence, 1011 residues long: Multiple C2 domain and transmembrane region protein 7 (1011 aa).

The C2 1 domain occupies 1–110 (MMMSNLKLGV…PHSDAVVLHF (110 aa)). Over residues 178–195 (QEHQHQHPQGPNQSSSLA) the composition is skewed to polar residues. The tract at residues 178 to 201 (QEHQHQHPQGPNQSSSLAAEQDNH) is disordered. C2 domains follow at residues 261 to 381 (IHKD…PQWY), 421 to 546 (VDCS…ARWY), and 587 to 709 (YSSD…THSY). Ca(2+) contacts are provided by aspartate 294, aspartate 300, aspartate 347, aspartate 349, and aspartate 354. Transmembrane regions (helical) follow at residues 812-832 (MMTV…ICSW), 846-866 (LMLV…MFLI), and 954-974 (IFVI…IQIV).

It belongs to the MCTP family. It depends on Ca(2+) as a cofactor. As to expression, accumulates specifically in hydathodes. Restricted the basal meristem of roots. Observed in flowers.

The protein localises to the membrane. Its subcellular location is the vesicle. It localises to the endosome membrane. Its function is as follows. May function as a signaling molecule by regulating the trafficking of other regulators. The polypeptide is Multiple C2 domain and transmembrane region protein 7 (Arabidopsis thaliana (Mouse-ear cress)).